A 369-amino-acid polypeptide reads, in one-letter code: Iron-sulfur cluster carrier protein (369 aa).

115-122 (GKGGVGKS) is an ATP binding site.

The protein belongs to the Mrp/NBP35 ATP-binding proteins family. As to quaternary structure, homodimer. Holo-ApbC forms a mixture of homodimers and homotetramers.

Its function is as follows. Binds and transfers iron-sulfur (Fe-S) clusters to target apoproteins. Can hydrolyze ATP. Both activities are required for function in vivo, but the ability to hydrolyze ATP is not necessary for Fe-S cluster transfer. The chain is Iron-sulfur cluster carrier protein from Salmonella typhimurium (strain LT2 / SGSC1412 / ATCC 700720).